A 196-amino-acid polypeptide reads, in one-letter code: DnaA initiator-associating protein DiaA (196 aa).

The 163-residue stretch at 34–196 folds into the SIS domain; it reads MVQSLLNGNK…DNTLFPHQND (163 aa).

This sequence belongs to the SIS family. DiaA subfamily. In terms of assembly, homotetramer; dimer of dimers.

In terms of biological role, required for the timely initiation of chromosomal replication via direct interactions with the DnaA initiator protein. The sequence is that of DnaA initiator-associating protein DiaA from Pectobacterium carotovorum subsp. carotovorum (strain PC1).